Reading from the N-terminus, the 337-residue chain is GTPase Obg (337 aa).

Residues 4–162 (SNFVDYAKIH…RQIVFQLKLL (159 aa)) enclose the Obg domain. The OBG-type G domain occupies 163–329 (ADVGLVGFPN…LKDLLWEKLR (167 aa)). GTP-binding positions include 169 to 176 (GFPNTGKS), 194 to 198 (FTTLE), 216 to 219 (DIPG), 283 to 286 (SKSD), and 310 to 312 (SSF). The Mg(2+) site is built by serine 176 and threonine 196.

This sequence belongs to the TRAFAC class OBG-HflX-like GTPase superfamily. OBG GTPase family. Monomer. Mg(2+) serves as cofactor.

It is found in the cytoplasm. Functionally, an essential GTPase which binds GTP, GDP and possibly (p)ppGpp with moderate affinity, with high nucleotide exchange rates and a fairly low GTP hydrolysis rate. Plays a role in control of the cell cycle, stress response, ribosome biogenesis and in those bacteria that undergo differentiation, in morphogenesis control. This Azobacteroides pseudotrichonymphae genomovar. CFP2 protein is GTPase Obg.